Here is a 350-residue protein sequence, read N- to C-terminus: C5a anaphylatoxin chemotactic receptor 1 (350 aa).

Residues 1 to 36 (APMENSTYDYTNYDSLGTLDPSTPVDNTVRRLRPTT) lie on the Extracellular side of the membrane. A glycan (N-linked (GlcNAc...) asparagine) is linked at asparagine 5. 2 positions are modified to sulfotyrosine: tyrosine 10 and tyrosine 13. The chain crosses the membrane as a helical span at residues 37–63 (IVALVIYMAVFLVGVPGNALVVWVTAL). At 64–68 (EAKRT) the chain is on the cytoplasmic side. Residues 69–92 (VNAIWFLNLAVADLLSCLALPILF) form a helical membrane-spanning segment. Over 93–109 (VSIIQEGHWPFGRAACS) the chain is Extracellular. Cysteines 108 and 187 form a disulfide. The helical transmembrane segment at 110–131 (VLPSLILLNMYASILLLATISA) threads the bilayer. Over 132–152 (DRFLLVFNPIWCQNTRGAGLA) the chain is Cytoplasmic. Residues 153–173 (WLACCVAWGLALLLTIPSFLY) traverse the membrane as a helical segment. Residues 174–200 (RKVLQDDYPPKTTCGVDYGHEGVRAER) lie on the Extracellular side of the membrane. Residues 201–226 (AVAIVRLVVGFLLPLFTLSVCYTFLL) traverse the membrane as a helical segment. Over 227 to 242 (LRTWSRNGTRSTKTLK) the chain is Cytoplasmic. The chain crosses the membrane as a helical span at residues 243–265 (VVVAVVVSFFIFWLPYQVMGMIL). Topologically, residues 266–282 (ALLHPSSATFRWAIRLD) are extracellular. A helical membrane pass occupies residues 283-303 (PLCIALAYVNCCINPIIYVVA). Residues 304-350 (GKGFQGQLRKSLPSLLRNVLAEESVIQGSKSFSRSTVDTVADKCQAV) are Cytoplasmic-facing. A phosphoserine mark is found at serine 314, serine 317, serine 327, serine 332, serine 334, and serine 338.

The protein belongs to the G-protein coupled receptor 1 family. In terms of assembly, homodimer. May also form higher-order oligomers. Interacts (when phosphorylated) with ARRB1 and ARRB2; the interaction is associated with internalization of C5aR. Post-translationally, sulfation plays a critical role in the association of C5aR with C5a, but no significant role in the ability of the receptor to transduce a signal and mobilize calcium in response to a small peptide agonist. In terms of processing, phosphorylated on serine residues in response to C5a binding, resulting in internalization of the receptor and short-term desensitization to C5a.

The protein resides in the cell membrane. The protein localises to the cytoplasmic vesicle. Its function is as follows. Receptor for the chemotactic and inflammatory peptide anaphylatoxin C5a. The ligand interacts with at least two sites on the receptor: a high-affinity site on the extracellular N-terminus, and a second site in the transmembrane region which activates downstream signaling events. Receptor activation stimulates chemotaxis, granule enzyme release, intracellular calcium release and superoxide anion production. This chain is C5a anaphylatoxin chemotactic receptor 1 (C5AR1), found in Oryctolagus cuniculus (Rabbit).